Here is a 430-residue protein sequence, read N- to C-terminus: Adenylosuccinate synthetase (430 aa).

Residues 11 to 17 and 39 to 41 contribute to the GTP site; these read GDEGKGK and GHT. D12 serves as the catalytic Proton acceptor. The Mg(2+) site is built by D12 and G39. Residues 12 to 15, 37 to 40, T130, R144, N226, T241, and R305 each bind IMP; these read DEGK and NAGH. Residue H40 is the Proton donor of the active site. 301 to 307 is a binding site for substrate; the sequence is VTTGRKR. GTP-binding positions include R307, 333–335, and 415–417; these read KLD and GTG.

Belongs to the adenylosuccinate synthetase family. Homodimer. It depends on Mg(2+) as a cofactor.

The protein resides in the cytoplasm. It catalyses the reaction IMP + L-aspartate + GTP = N(6)-(1,2-dicarboxyethyl)-AMP + GDP + phosphate + 2 H(+). It participates in purine metabolism; AMP biosynthesis via de novo pathway; AMP from IMP: step 1/2. In terms of biological role, plays an important role in the de novo pathway and in the salvage pathway of purine nucleotide biosynthesis. Catalyzes the first committed step in the biosynthesis of AMP from IMP. The sequence is that of Adenylosuccinate synthetase from Scheffersomyces stipitis (strain ATCC 58785 / CBS 6054 / NBRC 10063 / NRRL Y-11545) (Yeast).